We begin with the raw amino-acid sequence, 105 residues long: Nitrogen fixation nifHD region GlnB-like protein 1 (105 aa).

The protein belongs to the P(II) protein family.

Functionally, could be involved in the regulation of nitrogen fixation. In Methanothermobacter marburgensis (strain ATCC BAA-927 / DSM 2133 / JCM 14651 / NBRC 100331 / OCM 82 / Marburg) (Methanobacterium thermoautotrophicum), this protein is Nitrogen fixation nifHD region GlnB-like protein 1 (glnBA).